A 498-amino-acid polypeptide reads, in one-letter code: Protein MGF 505-5R (498 aa).

It belongs to the asfivirus MGF 505 family.

Plays a role in virus cell tropism, and may be required for efficient virus replication in macrophages. The sequence is that of Protein MGF 505-5R from African swine fever virus (strain Badajoz 1971 Vero-adapted) (Ba71V).